A 115-amino-acid polypeptide reads, in one-letter code: MKSFKEQYTLDERLAESREIIAKYPTRIPVIAEKYCKTDLPAIEKKKFLVPRDMSVGQFIYILSARLHLSPGKALFVFVNNTLPQTAALMDSVYESYKDDDGFVYMCYSSEKTFG.

The Phosphatidylethanolamine amidated glycine moiety is linked to residue G115.

Belongs to the ATG8 family. As to quaternary structure, interacts with ATG4. Interacts with NBR1. Gly-115 forms then a thioester bond with the 'Cys-558' of ATG7 (E1-like activating enzyme) before being transferred to the 'Cys-258' of ATG3 (the specific E2 conjugating enzyme), in order to be finally amidated with phosphatidylethanolamine. This lipid modification anchors ATG8 to autophagosomes. In terms of tissue distribution, constitutively expressed.

The protein resides in the cytoplasmic vesicle. Its subcellular location is the autophagosome membrane. The protein localises to the vacuole membrane. It is found in the cytoplasm. It localises to the cytoskeleton. In terms of biological role, ubiquitin-like modifier involved in autophagosomes formation. May mediate the delivery of the autophagosomes to the vacuole via the microtubule cytoskeleton. This Arabidopsis thaliana (Mouse-ear cress) protein is Autophagy-related protein 8i (ATG8I).